A 311-amino-acid chain; its full sequence is Putative tenascin-XA (311 aa).

Disordered stretches follow at residues 1–47 (MEDK…EPRL) and 124–150 (LSAE…SQLS). Fibronectin type-III domains lie at 41 to 135 (PPEE…LAPA), 145 to 249 (RLSQ…SPRD), and 250 to 311 (LQFS…SCVH).

Expressed in the adrenal gland.

In Homo sapiens (Human), this protein is Putative tenascin-XA (TNXA).